A 369-amino-acid chain; its full sequence is Virion membrane protein A16 homolog (369 aa).

A lipid anchor (N-myristoyl glycine; by host) is attached at Gly2. Residues Gly2–Ser330 lie on the Virion surface side of the membrane. Residues Phe331–Leu351 traverse the membrane as a helical segment. Residues Arg352–Lys369 are Intravirion-facing.

This sequence belongs to the poxviridae A16/G9/J5 family. Part of a stable entry-fusion complex (EFC) which is at least composed of proteins A16, A21, A28, G3, G9, H2, J5, and L5. Formation of the viral membrane is necessary for the assembly of the complex. Interacts with G9. Most cysteines are linked by disulfide bonds. They are created by the viral disulfide bond formation pathway, a poxvirus-specific redox pathway that operates on the cytoplasmic side of the MV membranes.

It is found in the virion membrane. Envelope protein part of the entry-fusion complex responsible for the virus membrane fusion with host cell membrane during virus entry. Also plays a role in cell-cell fusion (syncytium formation). In Fowlpox virus (strain NVSL) (FPV), this protein is Virion membrane protein A16 homolog.